The primary structure comprises 182 residues: Peptidyl-tRNA hydrolase (182 aa).

TRNA is bound at residue tyrosine 14. The active-site Proton acceptor is the histidine 19. TRNA-binding residues include phenylalanine 60, asparagine 62, and asparagine 106.

It belongs to the PTH family. In terms of assembly, monomer.

It is found in the cytoplasm. The catalysed reaction is an N-acyl-L-alpha-aminoacyl-tRNA + H2O = an N-acyl-L-amino acid + a tRNA + H(+). Its function is as follows. Hydrolyzes ribosome-free peptidyl-tRNAs (with 1 or more amino acids incorporated), which drop off the ribosome during protein synthesis, or as a result of ribosome stalling. Functionally, catalyzes the release of premature peptidyl moieties from peptidyl-tRNA molecules trapped in stalled 50S ribosomal subunits, and thus maintains levels of free tRNAs and 50S ribosomes. The protein is Peptidyl-tRNA hydrolase of Campylobacter concisus (strain 13826).